We begin with the raw amino-acid sequence, 326 residues long: GTP 3',8-cyclase (326 aa).

Residues 7–240 (AFARKFYYLR…AQVFHHSDYQ (234 aa)) form the Radical SAM core domain. Arg16 provides a ligand contact to GTP. Residues Cys23 and Cys27 each contribute to the [4Fe-4S] cluster site. Residue Tyr29 participates in S-adenosyl-L-methionine binding. Cys30 lines the [4Fe-4S] cluster pocket. Residue Arg65 coordinates GTP. An S-adenosyl-L-methionine-binding site is contributed by Gly69. GTP is bound at residue Thr96. An S-adenosyl-L-methionine-binding site is contributed by Ser120. Residue Lys157 coordinates GTP. Met191 provides a ligand contact to S-adenosyl-L-methionine. Cys254 and Cys257 together coordinate [4Fe-4S] cluster. 259–261 (RLR) is a GTP binding site. Cys271 contacts [4Fe-4S] cluster.

The protein belongs to the radical SAM superfamily. MoaA family. In terms of assembly, monomer and homodimer. [4Fe-4S] cluster is required as a cofactor.

It carries out the reaction GTP + AH2 + S-adenosyl-L-methionine = (8S)-3',8-cyclo-7,8-dihydroguanosine 5'-triphosphate + 5'-deoxyadenosine + L-methionine + A + H(+). It functions in the pathway cofactor biosynthesis; molybdopterin biosynthesis. In terms of biological role, catalyzes the cyclization of GTP to (8S)-3',8-cyclo-7,8-dihydroguanosine 5'-triphosphate. The sequence is that of GTP 3',8-cyclase from Yersinia pestis.